A 151-amino-acid chain; its full sequence is Succinate dehydrogenase subunit 4, mitochondrial (151 aa).

The N-terminal 78 residues, 1 to 78 (MSLRRTILDL…RSISSSIGQS (78 aa)), are a transit peptide targeting the mitochondrion. H109 lines the heme pocket. Y121 contacts a ubiquinone. Residues 130-150 (LIVMSLGLFQIIVLKDIILFL) traverse the membrane as a helical segment.

As to quaternary structure, component of complex II composed of eight subunits in plants: four classical SDH subunits SDH1, SDH2, SDH3 and SDH4 (a flavoprotein (FP), an iron-sulfur protein (IP), and a cytochrome b composed of a large and a small subunit.), as well as four subunits unknown in mitochondria from bacteria and heterotrophic eukaryotes. It depends on heme as a cofactor. Expressed in flowers, inflorescences and stems.

It is found in the mitochondrion inner membrane. Its pathway is carbohydrate metabolism; tricarboxylic acid cycle. Functionally, membrane-anchoring subunit of succinate dehydrogenase (SDH). This Arabidopsis thaliana (Mouse-ear cress) protein is Succinate dehydrogenase subunit 4, mitochondrial.